The primary structure comprises 785 residues: MTVLDLSYNFANLSVHDLLEARDTYHYHLLSKANVVGTAIGLYLIRKDEAWPTRKGEGKTPPNKKTYARTLSNSEVRDYSWPCILAFVRSWANEDAFGPAGRYDPAQIVPKTLYLADGRAVPVCVVQADQAGSDTSATYSPPGILPAHKLGGGSPIIVRVQGAEYSATAGCLVSDGHLTYALTARHACGEADTRIFSYLRSGEVEIGASSANQLTRKPFSEVYPDFPGRRSYVALDVGLVRLDQVDDWTSNTYGLPPVGPLGDVHEKNLSLRLIDQPVLGRGATSGLVRGTIKALFYRYRSVGGYDYVGDFLISPAEGLATRHGDSGMVWHLDATTEDDAANPKPLPKRDLRPLAVAWGGQVFEESGVRSAFSIATSLSNVCKLLDVELVTDQSRGVSGYWGRTGHYSIAAFAVALVGDTDLRDFLNRNLGILSFDLDTIAEKGFDKSVGQLGDNFVPLADVPDEIWKKLDHGKNGREGGRDVSAGPHGSDGPEHPNHYADIDGEIGPHKTFRAACLADDSNLTVDAWLQYYETMAAKAKADGDEDGARRHRNKLKQGLLPFRVWQFFDAMVAFVENKDVVGFLTAAGAAAHYMGDASQPLHGSVYSDGDASRTVTRHHPRTGEDEEVSYGSGVHSAFETAMIADKAAQLFPLIKQELSGPGGHALPLLTSGKAMAKATVELMDKVAGILEPMRILDSYEQAGAGTRKATLDGMWKDLGDDTAQVMALGARYLAMLWESAWVHGKGSDIPVRNLTDQNPQDVRARYIQTSFVPSLTLDKIGDELT.

Composition is skewed to basic and acidic residues over residues Leu-470–Arg-481 and Asp-491–Asp-501. Disordered regions lie at residues Leu-470–Asp-503 and Asp-608–Ser-629.

The protein belongs to the peptidase S1 family.

Probably a dedicated protease for substrate gasdermin bGSDM; cleaves the bGSDM precursor, releasing the pore-forming moiety, which integrates into the membrane and triggers cell death. Involved in defense against bacteriophages. Expression of gasdermin bGSDM and this neighboring protease is toxic in E.coli on solid medium. The protein is Probable serine protease Ga0098714_109514 of Bradyrhizobium tropiciagri.